The primary structure comprises 240 residues: Gas vesicle protein C (240 aa).

Residues 1–13 (MALKDKWQQDRIG) show a composition bias toward basic and acidic residues. Residues 1–20 (MALKDKWQQDRIGRQQGVQE) form a disordered region. 5 consecutive repeats follow at residues 18-50 (VQERQQQVQTTLSLWQQERQNQALDDQESRQGF), 51-83 (VTGVQQQTQELLTNISTERLWVAQQQREQLENF), 84-116 (IQQLSQEVGEFLQQTIEERSQVAAQLHQQLSEF), 117-149 (REDLEYRVTDLLANYQKQRLEARETLLEDLAIF), and 150-207 (RQTL…LQDY). Residues 18–207 (VQERQQQVQT…GVFRAELQDY (190 aa)) form a 5 X 33 AA tandem repeats region.

The protein belongs to the gas vesicle GvpC family.

It localises to the gas vesicle. Its function is as follows. Confers stability, involved in shaping gas vesicles, hollow, gas filled proteinaceous nanostructures. During planktonic growth they allow positioning of the organism at a favorable depth for light or nutrient acquisition. The sequence is that of Gas vesicle protein C from Planktothrix agardhii (Oscillatoria agardhii).